Here is a 328-residue protein sequence, read N- to C-terminus: Cytochrome c biogenesis protein CcsA (328 aa).

8 consecutive transmembrane segments (helical) span residues 15–35 (FLVL…PSVP), 37–57 (LQAL…ALLG), 68–88 (ISNL…AHLI), 97–117 (LVGV…ALTL), 142–162 (VMML…AFLF), 236–256 (IIGL…VWAN), 271–291 (WALI…TKGW), and 297–317 (AILA…VNLL).

Belongs to the CcmF/CycK/Ccl1/NrfE/CcsA family. In terms of assembly, may interact with ccs1.

It localises to the cellular thylakoid membrane. In terms of biological role, required during biogenesis of c-type cytochromes (cytochrome c6 and cytochrome f) at the step of heme attachment. The protein is Cytochrome c biogenesis protein CcsA of Gloeothece citriformis (strain PCC 7424) (Cyanothece sp. (strain PCC 7424)).